We begin with the raw amino-acid sequence, 492 residues long: NADH-quinone oxidoreductase subunit N (492 aa).

A run of 14 helical transmembrane segments spans residues 13 to 33 (MMTPEFIVLGTALILSLMDLF), 42 to 62 (PLAWIAFVGVAIALIATIGLI), 79 to 99 (FGKAFKLLLLAGGALSLLLAF), 111 to 131 (GEFYYLLLCALLGAMIMASSG), 133 to 153 (LITLFVGLELLSISSYILAGI), 168 to 188 (VINGGISTAITLFGMSYIFGL), 211 to 231 (YILAIAFLMMLVGLSFKISSV), 251 to 271 (FLSVVSKTAGFVIVLRLFITI), 284 to 304 (SLLFSMQDYIAFLAGATMIIG), 318 to 340 (FAYSSIAHAGYILVGFAAMSWVM), 344 to 366 (IWFYLLAYLFMNLGAFAILQRIS), 388 to 408 (AVAMGIFLLSLAGIPGTAGFI), 426 to 446 (VLAAVMIATTVVSYVYYFGIF), and 463 to 483 (PIGLAMVVVLCALGTLLFGVV).

Belongs to the complex I subunit 2 family. NDH-1 is composed of 14 different subunits. Subunits NuoA, H, J, K, L, M, N constitute the membrane sector of the complex.

Its subcellular location is the cell membrane. It catalyses the reaction a quinone + NADH + 5 H(+)(in) = a quinol + NAD(+) + 4 H(+)(out). NDH-1 shuttles electrons from NADH, via FMN and iron-sulfur (Fe-S) centers, to quinones in the respiratory chain. The immediate electron acceptor for the enzyme in this species is believed to be a menaquinone. Couples the redox reaction to proton translocation (for every two electrons transferred, four hydrogen ions are translocated across the cytoplasmic membrane), and thus conserves the redox energy in a proton gradient. This is NADH-quinone oxidoreductase subunit N from Geobacillus sp. (strain WCH70).